The following is a 244-amino-acid chain: NAD(P)H-quinone oxidoreductase subunit K (244 aa).

Positions 51, 52, 116, and 147 each coordinate [4Fe-4S] cluster.

Belongs to the complex I 20 kDa subunit family. As to quaternary structure, NDH-1 can be composed of about 15 different subunits; different subcomplexes with different compositions have been identified which probably have different functions. The cofactor is [4Fe-4S] cluster.

It localises to the cellular thylakoid membrane. The catalysed reaction is a plastoquinone + NADH + (n+1) H(+)(in) = a plastoquinol + NAD(+) + n H(+)(out). It catalyses the reaction a plastoquinone + NADPH + (n+1) H(+)(in) = a plastoquinol + NADP(+) + n H(+)(out). In terms of biological role, NDH-1 shuttles electrons from an unknown electron donor, via FMN and iron-sulfur (Fe-S) centers, to quinones in the respiratory and/or the photosynthetic chain. The immediate electron acceptor for the enzyme in this species is believed to be plastoquinone. Couples the redox reaction to proton translocation, and thus conserves the redox energy in a proton gradient. Cyanobacterial NDH-1 also plays a role in inorganic carbon-concentration. This Synechococcus sp. (strain JA-3-3Ab) (Cyanobacteria bacterium Yellowstone A-Prime) protein is NAD(P)H-quinone oxidoreductase subunit K.